Consider the following 978-residue polypeptide: Probable serine/threonine-protein kinase PLK (978 aa).

The span at 19 to 36 (IQIQQQQFKQPQQQPQQK) shows a compositional bias: low complexity. Disordered stretches follow at residues 19–66 (IQIQ…SSIH) and 121–143 (QQQQQQQQMPPPQSLPNKSNEPQ). Residues 37-53 (SNSCFSDQENYPANIQP) show a composition bias toward polar residues. Positions 54-64 (SSSTSSSSSSS) are enriched in low complexity. The Protein kinase domain occupies 163–416 (YRQGEFLGKG…LTQILEHDFF (254 aa)). ATP-binding positions include 169 to 177 (LGKGGFAKC) and Lys192. The active-site Proton acceptor is Asp286. Disordered regions lie at residues 463 to 554 (GTTS…FANL) and 601 to 638 (ENQQQQQQQQQQQQQQQQQQQRVNNNINNNGNTVTVTT). Low complexity-rich tracts occupy residues 473-492 (HHYQQYQQQPQQQYNNNYQQ) and 500-549 (INNM…NINN). Coiled coils occupy residues 497–555 (KKQI…ANLS) and 592–630 (IKQQYTNMNENQQQQQQQQQQQQQQQQQQQRVNNNINNN). The POLO box 1 domain maps to 696 to 780 (YISQYADFTN…IKYFLNHFTN (85 aa)). The interval 798 to 819 (NNNNNNNVENVTNNNNNNSNNS) is disordered. The region spanning 826–904 (YVKKWIKFDN…IYGTLSNNLY (79 aa)) is the POLO box 2 domain. The disordered stretch occupies residues 908–978 (PESSFQQLPQ…SIPQPQLINQ (71 aa)). The span at 913–978 (QQLPQQQYQQ…SIPQPQLINQ (66 aa)) shows a compositional bias: low complexity.

It belongs to the protein kinase superfamily. Ser/Thr protein kinase family. CDC5/Polo subfamily.

The enzyme catalyses L-seryl-[protein] + ATP = O-phospho-L-seryl-[protein] + ADP + H(+). It carries out the reaction L-threonyl-[protein] + ATP = O-phospho-L-threonyl-[protein] + ADP + H(+). This chain is Probable serine/threonine-protein kinase PLK (PLK), found in Dictyostelium discoideum (Social amoeba).